Here is a 707-residue protein sequence, read N- to C-terminus: Dendrin (707 aa).

5 disordered regions span residues methionine 1 to serine 22, glutamine 67 to tryptophan 86, alanine 94 to glycine 195, alanine 213 to leucine 273, and threonine 342 to glutamate 377. Positions alanine 103 to glycine 134 form a coiled coil. Residues valine 105–arginine 127 show a composition bias toward basic and acidic residues. The tract at residues arginine 113 to lysine 131 is nuclear localization. An interaction with MAGI2 region spans residues glycine 186–proline 236. Positions proline 340–alanine 434 are interaction with ACTN1. Residues proline 359–arginine 369 are compositionally biased toward basic residues. The residue at position 387 (serine 387) is a Phosphoserine. 2 disordered regions span residues lysine 389 to glutamate 421 and arginine 517 to glutamate 707. Residues glycine 406–glutamate 707 are interaction with CD2AP and NPHS1. Composition is skewed to basic and acidic residues over residues glutamate 524–serine 544 and glycine 692–glutamate 707.

Forms a ternary complex with MAGI2 and SH3KBP1; recruits DDN to the cytoplasm. Interacts with MAGI1. Interacts with ACTN1 and may interact with WWC1. Interacts with the podocyte slit diaphragm proteins CD2AP, NPHS1 and NPHS2; the interaction with CD2AP and NPHS1 is direct. Specifically expressed in forebrain structures, particularly in neocortex, olfactory bulb, hippocampus, caudate-putamen, and limbic system (at protein level). Also detected in spleen, liver, kidney and placenta (at protein level).

It is found in the cell projection. It localises to the dendritic spine membrane. The protein localises to the cytoplasm. The protein resides in the endoplasmic reticulum membrane. Its subcellular location is the perikaryon. It is found in the nucleus. In terms of biological role, promotes apoptosis of kidney glomerular podocytes. Podocytes are highly specialized cells essential to the ultrafiltration of blood, resulting in the extraction of urine and the retention of protein. This chain is Dendrin (Ddn), found in Rattus norvegicus (Rat).